Consider the following 433-residue polypeptide: Nuclear hormone receptor family member nhr-98 (433 aa).

Residues 41-116 (SKKCQICENP…FGMTIDNFQF (76 aa)) constitute a DNA-binding region (nuclear receptor). NR C4-type zinc fingers lie at residues 44–64 (CQIC…CRAC) and 80–104 (CKTE…MQRC). One can recognise an NR LBD domain in the interval 177 to 433 (ETPYQVSNVL…CSHPGIFLNA (257 aa)).

It belongs to the nuclear hormone receptor family.

It localises to the nucleus. Orphan nuclear receptor. The chain is Nuclear hormone receptor family member nhr-98 (nhr-98) from Caenorhabditis elegans.